The sequence spans 551 residues: Interleukin-2 receptor subunit beta (551 aa).

The N-terminal stretch at 1–26 is a signal peptide; sequence MAAPALSWRLPLLILLLPLATPWASA. Residues 27 to 240 lie on the Extracellular side of the membrane; sequence TVNGTSQFTC…TKPASLGKDT (214 aa). Asparagine 29, asparagine 43, and asparagine 71 each carry an N-linked (GlcNAc...) asparagine glycan. An intrachain disulfide couples cysteine 36 to cysteine 46. The cysteines at positions 74 and 86 are disulfide-linked. A Fibronectin type-III domain is found at 134–234; sequence APISLQVVHV…QPLAFRTKPA (101 aa). Residue asparagine 149 is glycosylated (N-linked (GlcNAc...) asparagine). The WSXWS motif signature appears at 220-224; the sequence is WSPWS. A helical transmembrane segment spans residues 241-265; that stretch reads IPWLGHLLVGLSGAFGFIILVYLLI. Residues 266–551 are Cytoplasmic-facing; that stretch reads NCRNTGPWLK…LQGQDPTHLV (286 aa). The short motif at 278-286 is the Box 1 motif element; that stretch reads LKCHTPDPS. Disordered regions lie at residues 393 to 412 and 433 to 476; these read DEGVAGAPTGSSPQPLQPLS and SLLG…GPPT.

This sequence belongs to the type I cytokine receptor family. Type 4 subfamily. In terms of assembly, non-covalent dimer of an alpha and a beta subunit. IL2R exists in 3 different forms: a high affinity dimer, an intermediate affinity monomer (beta subunit), and a low affinity monomer (alpha subunit). The high and intermediate affinity forms also associate with a gamma subunit. Interacts with SHB upon interleukin stimulation.

The protein localises to the cell membrane. It is found in the cell surface. Its function is as follows. Receptor for interleukin-2. This beta subunit is involved in receptor mediated endocytosis and transduces the mitogenic signals of IL2. Probably in association with IL15RA, involved in the stimulation of neutrophil phagocytosis by IL15. The polypeptide is Interleukin-2 receptor subunit beta (IL2RB) (Pan troglodytes (Chimpanzee)).